The chain runs to 474 residues: Trigger factor (474 aa).

The PPIase FKBP-type domain occupies 174 to 261 (GDIAVVSFKG…LKDLKEKELP (88 aa)). The interval 435 to 474 (VKEKTTKTSKATKTSKTTKATKTASKTTKTTKTQNKKEKK) is disordered. Residues 442 to 467 (TSKATKTSKTTKATKTASKTTKTTKT) are compositionally biased toward low complexity.

The protein belongs to the FKBP-type PPIase family. Tig subfamily.

The protein localises to the cytoplasm. It catalyses the reaction [protein]-peptidylproline (omega=180) = [protein]-peptidylproline (omega=0). Involved in protein export. Acts as a chaperone by maintaining the newly synthesized protein in an open conformation. Functions as a peptidyl-prolyl cis-trans isomerase. This Prochlorococcus marinus (strain AS9601) protein is Trigger factor.